The primary structure comprises 92 residues: Protein RESPONSE TO LOW SULFUR 4 (92 aa).

Residues 8 to 63 (VMVAASEVEELRQKNGEMEKAVEEMRKEMLQLWRRTQVAEEAEEHLCSQLAELEAE) are a coiled coil.

Required for flower development in short-day conditions. In Arabidopsis thaliana (Mouse-ear cress), this protein is Protein RESPONSE TO LOW SULFUR 4.